Here is a 505-residue protein sequence, read N- to C-terminus: Cytochrome P450 52C1 (505 aa).

A helical transmembrane segment spans residues 4–21 (LFCFLAGIIVVYKAAQYY). Residue Cys453 participates in heme binding.

Belongs to the cytochrome P450 family. Heme serves as cofactor.

The protein resides in the membrane. In terms of biological role, together with an NADPH cytochrome P450 the enzyme system catalyzes the terminal hydroxylation as the first step in the assimilation of alkanes and fatty acids. The polypeptide is Cytochrome P450 52C1 (CYP52C1) (Candida tropicalis (Yeast)).